The chain runs to 156 residues: Ribonuclease pancreatic (156 aa).

Positions 1 to 28 (MALEKSLVLLPLLVLILLVLGWVQPSLG) are cleaved as a signal peptide. The substrate site is built by Lys-35 and Arg-38. His-40 acts as the Proton acceptor in catalysis. N-linked (GlcNAc...) asparagine glycosylation is found at Asn-50 and Asn-62. Cystine bridges form between Cys-54-Cys-112, Cys-68-Cys-123, Cys-86-Cys-138, and Cys-93-Cys-100. Substrate is bound by residues 69-73 (KPVNT) and Lys-94. The N-linked (GlcNAc...) asparagine glycan is linked to Asn-104. Arg-113 lines the substrate pocket. His-147 functions as the Proton donor in the catalytic mechanism.

It belongs to the pancreatic ribonuclease family. As to quaternary structure, monomer. Interacts with and forms tight 1:1 complexes with RNH1. Dimerization of two such complexes may occur. Interaction with RNH1 inhibits this protein. As to expression, pancreas and other tissues and body fluids (indicating it may have other physiological functions besides its role in digestion).

The protein resides in the secreted. The enzyme catalyses an [RNA] containing cytidine + H2O = an [RNA]-3'-cytidine-3'-phosphate + a 5'-hydroxy-ribonucleotide-3'-[RNA].. The catalysed reaction is an [RNA] containing uridine + H2O = an [RNA]-3'-uridine-3'-phosphate + a 5'-hydroxy-ribonucleotide-3'-[RNA].. Its function is as follows. Endonuclease that catalyzes the cleavage of RNA on the 3' side of pyrimidine nucleotides. Acts on single-stranded and double-stranded RNA. The sequence is that of Ribonuclease pancreatic (RNASE1) from Pongo pygmaeus (Bornean orangutan).